The primary structure comprises 492 residues: N-succinylglutamate 5-semialdehyde dehydrogenase (492 aa).

225–230 contacts NAD(+); it reads GSSNTG. Residues Glu248 and Cys282 contribute to the active site.

The protein belongs to the aldehyde dehydrogenase family. AstD subfamily.

The enzyme catalyses N-succinyl-L-glutamate 5-semialdehyde + NAD(+) + H2O = N-succinyl-L-glutamate + NADH + 2 H(+). The protein operates within amino-acid degradation; L-arginine degradation via AST pathway; L-glutamate and succinate from L-arginine: step 4/5. Functionally, catalyzes the NAD-dependent reduction of succinylglutamate semialdehyde into succinylglutamate. This Colwellia psychrerythraea (strain 34H / ATCC BAA-681) (Vibrio psychroerythus) protein is N-succinylglutamate 5-semialdehyde dehydrogenase.